Consider the following 390-residue polypeptide: Galactokinase (390 aa).

33 to 36 (EHTD) is a substrate binding site. Residues serine 67 and 124–130 (GSGLSSS) contribute to the ATP site. Mg(2+)-binding residues include serine 130 and glutamate 162. The Proton acceptor role is filled by aspartate 174. Tyrosine 224 is a substrate binding site.

This sequence belongs to the GHMP kinase family. GalK subfamily.

It is found in the cytoplasm. The enzyme catalyses alpha-D-galactose + ATP = alpha-D-galactose 1-phosphate + ADP + H(+). It functions in the pathway carbohydrate metabolism; galactose metabolism. In terms of biological role, catalyzes the transfer of the gamma-phosphate of ATP to D-galactose to form alpha-D-galactose-1-phosphate (Gal-1-P). The sequence is that of Galactokinase from Streptococcus mutans serotype c (strain ATCC 700610 / UA159).